Reading from the N-terminus, the 513-residue chain is MKTVVVLDYGSQYTQLIVRRVREKGYYAELLPWDAKEEEVKRLNPTAIILSGGPSSVYEKDAPFVPEYVLHLNIPILGICYGLQALVHKFGGRVEKSQKREFGHAILEVEEDPLFEGLPKKFDVWMSHSDRVEKLPEGFYVIGRSENSPFAAIRNKNETIYGVQFHPEVTHTQFGSKILENFVSKIAKMEKNWEMKDFVSEKIKEIKGIVGNDKVILGLSGGVDSSVVAMLLHKAIGDNLVPVFVDTGLLRLNEGEEVKENFERLGIKIFVVDAKKRFLDALKDVEDPEEKRKIIGHTFIDVFYETSMQLLEEFGNIKYLAQGTLYPDIIESKVSERKSAAKIKTHHNVGGLPEKLPFKIIEPLRYLFKDEVRKIGEILELPQSMINRHPFPGPGLAVRIIGKVTEEAISILQKADYIFIEELKKNNLYDKVWQAFAVFLPIKSVGVMGDYRTYENVIALRAVNSFDGMTADWSKLPHEFLNKVAKRIINEVKGVNRVVYDITSKPPATIEWE.

A Glutamine amidotransferase type-1 domain is found at threonine 3–asparagine 192. Cysteine 80 serves as the catalytic Nucleophile. Catalysis depends on residues histidine 166 and glutamate 168. The GMPS ATP-PPase domain maps to tryptophan 193–arginine 388. ATP is bound at residue serine 220–serine 226.

In terms of assembly, homodimer.

The enzyme catalyses XMP + L-glutamine + ATP + H2O = GMP + L-glutamate + AMP + diphosphate + 2 H(+). Its pathway is purine metabolism; GMP biosynthesis; GMP from XMP (L-Gln route): step 1/1. Functionally, catalyzes the synthesis of GMP from XMP. The chain is GMP synthase [glutamine-hydrolyzing] from Thermosipho melanesiensis (strain DSM 12029 / CIP 104789 / BI429).